The sequence spans 334 residues: Nucleoid-associated protein plu2870 (334 aa).

It belongs to the YejK family.

It localises to the cytoplasm. The protein resides in the nucleoid. This chain is Nucleoid-associated protein plu2870, found in Photorhabdus laumondii subsp. laumondii (strain DSM 15139 / CIP 105565 / TT01) (Photorhabdus luminescens subsp. laumondii).